Reading from the N-terminus, the 380-residue chain is Phthiodiolone/phenolphthiodiolone dimycocerosates ketoreductase (380 aa).

Belongs to the mer family. Phthiodiolone/phenolphthiodiolone dimycocerosates ketoreductase subfamily.

Functionally, catalyzes the reduction of the keto moiety of phthiodiolone dimycocerosates (DIM B) and glycosylated phenolphthiodiolone dimycocerosates to form the intermediate compounds phthiotriol and glycosylated phenolphthiotriol dimycocerosates during phthiocerol dimycocerosates (DIM A) and glycosylated phenolphthiocerol dimycocerosates (PGL) biosynthesis. This chain is Phthiodiolone/phenolphthiodiolone dimycocerosates ketoreductase, found in Mycobacterium sp. (strain JLS).